Consider the following 525-residue polypeptide: G-protein regulator 1 (525 aa).

One can recognise a GoLoco domain in the interval 424–445 (PVDMMDLIFSMSSRMDDQRTEL). Residues 488–525 (HTMNRILKRSKKSKSSLDSTNSMQGDDTRSDDVTMTSK) are disordered.

In terms of assembly, interacts with gpr-1, lin-5 and GDP-bound goa-1.

The protein resides in the cytoplasm. It is found in the cell cortex. The protein localises to the cytoskeleton. It localises to the spindle. In the 1-cell embryo, probably together with gpr-2, controls nuclear rotation and spindle elongation during mitosis. Complex of gpr-1 and gpr-2, in association with lin-5, activates G-protein signaling to affect mitotic spindle force. Polarity determinants (par genes) may regulate lin-5/gpr-1/gpr-2/goa-1 locally to create the asymmetric forces that drive spindle movement. This Caenorhabditis elegans protein is G-protein regulator 1 (gpr-1).